The chain runs to 48 residues: Gas vesicle protein A (48 aa).

This sequence belongs to the gas vesicle GvpA family. In terms of assembly, the gas vesicle shell is 2 nm thick and consists of a single layer of this protein. It forms helical ribs nearly perpendicular to the long axis of the vesicle.

It is found in the gas vesicle shell. Gas vesicles are hollow, gas filled proteinaceous nanostructures found in some microorganisms. During planktonic growth they allow positioning of the organism at a favorable depth for light or nutrient acquisition. GvpA forms the protein shell. The polypeptide is Gas vesicle protein A (Spirulina sp. (strain CCAP 1475/10)).